Consider the following 663-residue polypeptide: Methionine--tRNA ligase (663 aa).

The 'HIGH' region motif lies at 10-20 (AYTNGPLHLGH). Residues cysteine 142, cysteine 145, cysteine 154, and cysteine 157 each coordinate Zn(2+). The short motif at 323–327 (KMSTS) is the 'KMSKS' region element. Threonine 326 provides a ligand contact to ATP. One can recognise a tRNA-binding domain in the interval 563-663 (YFTKVDLRVG…REISLGSKIH (101 aa)).

The protein belongs to the class-I aminoacyl-tRNA synthetase family. MetG type 1 subfamily. In terms of assembly, homodimer. The cofactor is Zn(2+).

The protein resides in the cytoplasm. The catalysed reaction is tRNA(Met) + L-methionine + ATP = L-methionyl-tRNA(Met) + AMP + diphosphate. Its function is as follows. Is required not only for elongation of protein synthesis but also for the initiation of all mRNA translation through initiator tRNA(fMet) aminoacylation. The chain is Methionine--tRNA ligase from Methanococcus vannielii (strain ATCC 35089 / DSM 1224 / JCM 13029 / OCM 148 / SB).